The chain runs to 58 residues: Ribosome modulation factor (58 aa).

Residues 1–28 (MKRQKRDRFERAHTQGFKAGLHGRSKDN) are disordered.

It belongs to the ribosome modulation factor family.

The protein localises to the cytoplasm. Its function is as follows. During stationary phase, converts 70S ribosomes to an inactive dimeric form (100S ribosomes). The chain is Ribosome modulation factor from Idiomarina loihiensis (strain ATCC BAA-735 / DSM 15497 / L2-TR).